The sequence spans 1024 residues: Beta-galactosidase (1024 aa).

Residues N103 and D202 each coordinate substrate. D202 serves as a coordination point for Na(+). Mg(2+) is bound by residues E417, H419, and E462. Substrate contacts are provided by residues E462 and 538-541 (EYAH). Catalysis depends on E462, which acts as the Proton donor. The Nucleophile role is filled by E538. Mg(2+) is bound at residue N598. The Na(+) site is built by F602 and N605. Residues N605 and W1000 each coordinate substrate.

It belongs to the glycosyl hydrolase 2 family. Homotetramer. Mg(2+) is required as a cofactor. Requires Na(+) as cofactor.

It carries out the reaction Hydrolysis of terminal non-reducing beta-D-galactose residues in beta-D-galactosides.. This chain is Beta-galactosidase, found in Escherichia coli O157:H7.